The sequence spans 121 residues: Large ribosomal subunit protein eL8 (121 aa).

It belongs to the eukaryotic ribosomal protein eL8 family. In terms of assembly, part of the 50S ribosomal subunit. Probably part of the RNase P complex.

It localises to the cytoplasm. In terms of biological role, multifunctional RNA-binding protein that recognizes the K-turn motif in ribosomal RNA, the RNA component of RNase P, box H/ACA, box C/D and box C'/D' sRNAs. This is Large ribosomal subunit protein eL8 from Thermoplasma volcanium (strain ATCC 51530 / DSM 4299 / JCM 9571 / NBRC 15438 / GSS1).